A 223-amino-acid chain; its full sequence is MEDPAGRRVDYGDRRFDEHDLAPTPLAQFQAWYSDAVEAGVVEPNAMTVATAGADGVSARTVLLKAVDGRGFVFYTNQRSRKALAIAHDPRVALLFTWHGTHRQVAVRGTAEEVPRAETEAYFASRPYGSRIGAWVSEQSRTTPSAAALHEREAQLRERWPDTGSPDDVPTPPHWGGYLVRALEVEFWQGRTSRLHDRLVLVAADGPARLDDPAPWRTERRQP.

Residues 8–11 and lysine 65 contribute to the substrate site; that span reads RVDY. FMN-binding positions include 60–65, 75–76, arginine 81, lysine 82, and glutamine 104; these read RTVLLK and YT. Residues tyrosine 122, arginine 126, and serine 130 each contribute to the substrate site. FMN-binding positions include 139 to 140 and tryptophan 188; that span reads QS. Substrate is bound at residue 194 to 196; that stretch reads RLH. Arginine 198 provides a ligand contact to FMN.

Belongs to the pyridoxamine 5'-phosphate oxidase family. As to quaternary structure, homodimer. It depends on FMN as a cofactor.

The enzyme catalyses pyridoxamine 5'-phosphate + O2 + H2O = pyridoxal 5'-phosphate + H2O2 + NH4(+). It carries out the reaction pyridoxine 5'-phosphate + O2 = pyridoxal 5'-phosphate + H2O2. It participates in cofactor metabolism; pyridoxal 5'-phosphate salvage; pyridoxal 5'-phosphate from pyridoxamine 5'-phosphate: step 1/1. It functions in the pathway cofactor metabolism; pyridoxal 5'-phosphate salvage; pyridoxal 5'-phosphate from pyridoxine 5'-phosphate: step 1/1. Its function is as follows. Catalyzes the oxidation of either pyridoxine 5'-phosphate (PNP) or pyridoxamine 5'-phosphate (PMP) into pyridoxal 5'-phosphate (PLP). The polypeptide is Pyridoxine/pyridoxamine 5'-phosphate oxidase (Kineococcus radiotolerans (strain ATCC BAA-149 / DSM 14245 / SRS30216)).